Here is a 371-residue protein sequence, read N- to C-terminus: Glycerol-3-phosphate dehydrogenase [NAD(+)] 2 (371 aa).

NAD(+)-binding positions include 18–23 (GSGNWG), Phe50, and Phe106. Lys129 contributes to the substrate binding site. Residue Ala162 coordinates NAD(+). Lys222 acts as the Proton acceptor in catalysis. Residues Arg294 and Gln323 each contribute to the NAD(+) site. 294-295 (RN) is a binding site for substrate.

This sequence belongs to the NAD-dependent glycerol-3-phosphate dehydrogenase family. As to quaternary structure, interacts with human CFH/complement factor H; the interaction is direct and enables the pathogen to evade the host innate immune system. Interacts with human CFHR1/complement factor H-related protein 1; the interaction is direct. Interacts with human PLG/plasminogen; the interaction is direct and provides active plasmin on the surface of fungal cells.

The protein resides in the secreted. It localises to the cell wall. Its subcellular location is the cytoplasm. It is found in the peroxisome. It catalyses the reaction sn-glycerol 3-phosphate + NAD(+) = dihydroxyacetone phosphate + NADH + H(+). Functionally, may catalyze the production and accumulation of glycerol during hyperosmotic stress conditions. Glycerol acts as a osmoregulator that prevents loss of water and turgor of the cells. Mediates evasion of the host innate immune system by binding inhibitory components of the host alternative complement system, in a manner dependent on estrogen-induced inhibition of EBP1. The chain is Glycerol-3-phosphate dehydrogenase [NAD(+)] 2 from Candida albicans (strain SC5314 / ATCC MYA-2876) (Yeast).